The following is a 261-amino-acid chain: Protein LIKE COV 2 (261 aa).

A disordered region spans residues M1–R38. Residues M1–G56 are Cytoplasmic-facing. Positions A7 to T17 are enriched in polar residues. The chain crosses the membrane as a helical span at residues F57–V77. The Extracellular portion of the chain corresponds to D78–D91. The chain crosses the membrane as a helical span at residues I92–S112. Residues S113–L261 lie on the Cytoplasmic side of the membrane.

The protein belongs to the plant COV1 protein family.

It localises to the membrane. The protein is Protein LIKE COV 2 of Arabidopsis thaliana (Mouse-ear cress).